The sequence spans 1147 residues: Lon protease homolog 2, peroxisomal (1147 aa).

The region spanning Leu20 to Ile348 is the Lon N-terminal domain. Disordered regions lie at residues Lys395 to Asp444 and Lys561 to Thr626. A compositionally biased stretch (acidic residues) spans Asp427 to Asp444. 2 stretches are compositionally biased toward basic and acidic residues: residues Lys561–Glu574 and Lys582–Asp597. Gly651–Thr658 serves as a coordination point for ATP. One can recognise a Lon proteolytic domain in the interval Ser903–Asp1131. Active-site residues include Ser1006 and Lys1049.

The protein belongs to the peptidase S16 family.

The protein resides in the peroxisome matrix. It carries out the reaction Hydrolysis of proteins in presence of ATP.. ATP-dependent serine protease that mediates the selective degradation of misfolded and unassembled polypeptides in the peroxisomal matrix. Necessary for type 2 peroxisome targeting signal (PTS2)-containing protein processing and facilitates peroxisome matrix protein import. The protein is Lon protease homolog 2, peroxisomal of Debaryomyces hansenii (strain ATCC 36239 / CBS 767 / BCRC 21394 / JCM 1990 / NBRC 0083 / IGC 2968) (Yeast).